Consider the following 280-residue polypeptide: Elongation factor Ts (280 aa).

The tract at residues 79 to 82 (TDFV) is involved in Mg(2+) ion dislocation from EF-Tu.

Belongs to the EF-Ts family.

Its subcellular location is the cytoplasm. In terms of biological role, associates with the EF-Tu.GDP complex and induces the exchange of GDP to GTP. It remains bound to the aminoacyl-tRNA.EF-Tu.GTP complex up to the GTP hydrolysis stage on the ribosome. This chain is Elongation factor Ts, found in Vibrio cholerae serotype O1 (strain ATCC 39541 / Classical Ogawa 395 / O395).